A 269-amino-acid chain; its full sequence is Surfeit locus protein 4 (269 aa).

6 consecutive transmembrane segments (helical) span residues 64 to 84 (FLAS…CILV), 92 to 112 (YACF…SILW), 157 to 177 (MQLG…HFDM), 179 to 199 (FFYI…AIGF), 203 to 223 (LAAL…NAFW), and 242 to 262 (TMSV…GVSM). The short motif at 266–269 (KKEW) is the Di-lysine motif element.

Belongs to the SURF4 family.

It localises to the endoplasmic reticulum membrane. The protein localises to the endoplasmic reticulum-Golgi intermediate compartment membrane. Its subcellular location is the golgi apparatus membrane. In terms of biological role, endoplasmic reticulum cargo receptor that mediates the export of lipoproteins by recruiting cargos into COPII vesicles to facilitate their secretion. Acts as a cargo receptor for lipoproteins bearing both APOB and APOA1, thereby regulating lipoprotein delivery and the maintenance of lipid homeostasis. This Gallus gallus (Chicken) protein is Surfeit locus protein 4.